The primary structure comprises 263 residues: Aquaporin Lacbi1:247946 (263 aa).

Topologically, residues 1 to 18 are cytoplasmic; that stretch reads MKLTISHHKCAIRKVMAE. The helical transmembrane segment at 19–39 threads the bilayer; the sequence is FVGVALLVIFGAGTACQVVLS. The Extracellular segment spans residues 40-45; that stretch reads TNPSSF. Residues 46 to 66 form a helical membrane-spanning segment; sequence LSINFGWAIGIATGAWVSAGI. Topologically, residues 67 to 89 are cytoplasmic; sequence SGGHINPAITIAMATYRGFPWRE. Residues 72–74 carry the NPA 1 motif; it reads NPA. The chain crosses the membrane as a helical span at residues 90–110; the sequence is VPGYIFAQALGGFVGAALVYA. The Extracellular portion of the chain corresponds to 111–143; sequence NYFHAIDIFEGGHIRTQATASLFATFALPYMTQ. The helical transmembrane segment at 144–164 threads the bilayer; the sequence is ASCFFSEFLATAVLFIVFLAL. Residues 165-169 are Cytoplasmic-facing; it reads NDKHN. Residues 170–190 traverse the membrane as a helical segment; it reads GALTNGLLPFALFILFIGLGA. Topologically, residues 191–227 are extracellular; the sequence is SLGMQTGYAVNPARDFGPRLFLAMAGYGKAVFNYRRQ. Positions 201 to 203 match the NPA 2 motif; that stretch reads NPA. The chain crosses the membrane as a helical span at residues 228-248; it reads YWIWAPIIAPILGAQAGGLLY. The Cytoplasmic portion of the chain corresponds to 249 to 263; sequence DTSIYNGDDSPIKWR.

It belongs to the MIP/aquaporin (TC 1.A.8) family.

The protein localises to the membrane. The enzyme catalyses H2O(in) = H2O(out). Water channel required to facilitate the transport of water across membranes. Shows low but significant water conductivity, but no glycerol nor ammonium transport activities. The chain is Aquaporin Lacbi1:247946 from Laccaria bicolor (strain S238N-H82 / ATCC MYA-4686) (Bicoloured deceiver).